The following is a 141-amino-acid chain: ATP synthase epsilon chain (141 aa).

The protein belongs to the ATPase epsilon chain family. F-type ATPases have 2 components, CF(1) - the catalytic core - and CF(0) - the membrane proton channel. CF(1) has five subunits: alpha(3), beta(3), gamma(1), delta(1), epsilon(1). CF(0) has three main subunits: a, b and c.

Its subcellular location is the cell inner membrane. Its function is as follows. Produces ATP from ADP in the presence of a proton gradient across the membrane. The protein is ATP synthase epsilon chain of Burkholderia ambifaria (strain ATCC BAA-244 / DSM 16087 / CCUG 44356 / LMG 19182 / AMMD) (Burkholderia cepacia (strain AMMD)).